We begin with the raw amino-acid sequence, 259 residues long: 1,2-dihydroxy-1,2-dihydronaphthalene dehydrogenase (259 aa).

8–32 (SITGAGSGIGLELVRSFKSAGYYVS) contacts NAD(+). Ser140 is a binding site for substrate. Catalysis depends on Tyr153, which acts as the Proton acceptor.

Belongs to the short-chain dehydrogenases/reductases (SDR) family.

The enzyme catalyses (1R,2S)-1,2-dihydronaphthalene-1,2-diol + NAD(+) = naphthalene-1,2-diol + NADH + H(+). It catalyses the reaction cis-1,2-dihydroxy-1,2-dihydrodibenzothiophene + NAD(+) = 1,2-dihydroxydibenzothiophene + NADH + H(+). It functions in the pathway aromatic compound metabolism; naphthalene degradation. In terms of biological role, catalyzes the oxidation of naphthalene dihydrodiol into 1,2-dihydroxynaphthalene. This is 1,2-dihydroxy-1,2-dihydronaphthalene dehydrogenase (nahB) from Pseudomonas putida (Arthrobacter siderocapsulatus).